An 848-amino-acid chain; its full sequence is MYLYIETLKQRLDAINQLRVDRALAAMGPAFQQVYSLLPTLLHYHHPLMPGYLDGNVPKGICLYTPDETQRHYLNELELYRGMSVQDPPKGELPITGVYTMGSTSSVGQSCSSDLDIWVCHQSWLDSEERQLLQRKCSLLENWAASLGVEVSFFLIDENRFRHNESGSLGGEDCGSTQHILLLDEFYRTAVRLAGKRILWNMVPCDEEEHYDDYVMTLYAQGVLTPNEWLDLGGLSSLSAEEYFGASLWQLYKSIDSPYKAVLKTLLLEAYSWEYPNPRLLAKDIKQRLHDGEIVSFGLDPYCMMLERVTEYLTAIEDFTRLDLVRRCFYLKVCEKLSRERACVGWRRAVLSQLVSEWGWDEARLAMLDNRANWKIDQVREAHNELLDAMMQSYRNLIRFARRNNLSVSASPQDIGVLTRKLYAAFEALPGKVTLVNPQISPDLSEPNLTFIYVPPGRANRSGWYLYNRAPNIESIISHQPLEYNRYLNKLVAWAWFNGLLTSRTRLYIKGNGIVDLPKLQEMVADVSHHFPLRLPAPTPKALYSPCEIRHLAIIVNLEYDPTAAFRNQVVHFDFRKLDVFSFGENQNCLVGSVDLLYRNSWNEVRTLHFNGEQSMIEALKTILGKMHQDAAPPDSVEVFCYSQHLRGLIRTRVQQLVSECIELRLSSTRQETGRFKALRVSGQTWGLFFERLNVSVQKLENAIEFYGAISHNKLHGLSVQVETNHVKLPAVVDGFASEGIIQFFFEETQDENGFNIYILDESNRVEVYHHCEGSKEELVRDVSRFYSSSHDRFTYGSSFINFNLPQFYQIVKVDGREQVIPFRTKSIGNMPPANQDHDTPLLQQYFS.

The catalytic stretch occupies residues 1–535; that stretch reads MYLYIETLKQ…DVSHHFPLRL (535 aa). Residues 541–848 form a regulatory region; it reads KALYSPCEIR…DTPLLQQYFS (308 aa). The residue at position 609 (His609) is a Phosphohistidine; by CRR.

It belongs to the adenylyl cyclase class-1 family.

The protein localises to the cytoplasm. It catalyses the reaction ATP = 3',5'-cyclic AMP + diphosphate. With respect to regulation, the regulatory domain is involved in the regulation of cyclase activity by the carbon source. Activated by the PTS system, glucose-specific IIA component (CRR). Its function is as follows. Catalyzes the formation of the second messenger cAMP from ATP. Its transcript is probably degraded by endoribonuclease LS (rnlA), decreasing cAMP levels and the negative regulator Crp-cAMP, which then induces its own transcription again. The chain is Adenylate cyclase (cyaA) from Escherichia coli (strain K12).